Consider the following 199-residue polypeptide: Recombination protein RecR (199 aa).

The segment at 58-73 adopts a C4-type zinc-finger fold; sequence CSACGNVDTQDPCAIC. A Toprim domain is found at 81-176; that stretch reads HILCIVEEVG…SVSRLAHGVP (96 aa).

The protein belongs to the RecR family.

In terms of biological role, may play a role in DNA repair. It seems to be involved in an RecBC-independent recombinational process of DNA repair. It may act with RecF and RecO. This chain is Recombination protein RecR, found in Parvibaculum lavamentivorans (strain DS-1 / DSM 13023 / NCIMB 13966).